Reading from the N-terminus, the 37-residue chain is Translationally-controlled tumor protein homolog (37 aa).

The region spanning 1–37 (MKIFRDILTNAEVVXDNDKPMDVLDEIVYAXQGRYIE) is the TCTP domain.

The protein belongs to the TCTP family. In terms of assembly, monomer.

The protein resides in the cytoplasm. Functionally, binds calcium; exact function not known. In Trypanosoma brucei brucei, this protein is Translationally-controlled tumor protein homolog.